Consider the following 366-residue polypeptide: Transcription factor IIIA (366 aa).

C2H2-type zinc fingers lie at residues 35–59 (YICS…LCKH), 65–89 (FPCK…SLTH), 95–120 (FTCD…NRFH), 127–151 (YVCH…QFSH), 157–181 (YECP…EKVH), 184–210 (YPCK…AECH), 214–236 (AVCD…QKTH), 243–268 (YLCP…QSFH), and 274–298 (FVCE…SVVH). Ser-38 carries the phosphoserine; by CK2 modification. The span at 299–310 (DPEKRKLKEKCP) shows a compositional bias: basic and acidic residues. The segment at 299–366 (DPEKRKLKEK…SLVLDKLTIQ (68 aa)) is disordered. The residue at position 336 (Ser-336) is a Phosphoserine; by CK2; in vitro.

Post-translationally, the N-terminus is blocked. In terms of tissue distribution, synthesized in oocytes and, in much lower levels, in somatic cells.

It is found in the nucleus. Its function is as follows. Involved in ribosomal large subunit biogenesis. Acts both as a positive transcription factor for 5S RNA genes, and as a specific RNA binding protein that complexes with 5S RNA in oocytes to form the 7S ribonucleoprotein storage particle. May play an essential role in the developmental change in 5S RNA gene expression. Interacts with the internal control region (ICR) of approximately 50 bases within the 5S RNA genes, is required for correct transcription of these genes by RNA polymerase III. Also binds the transcribed 5S RNA's. This chain is Transcription factor IIIA (gtf3a), found in Xenopus laevis (African clawed frog).